The primary structure comprises 147 residues: Transcription elongation factor Spt5 (147 aa).

Positions 91–122 (KGDVVEIIAGPFKGERAKVIRVDKHKEEVTLE) constitute a KOW domain.

This sequence belongs to the archaeal Spt5 family. In terms of assembly, heterodimer composed of Spt4 and Spt5. Interacts with RNA polymerase (RNAP). Forms a homodimer in solution.

In terms of biological role, stimulates transcription elongation. The sequence is that of Transcription elongation factor Spt5 from Methanocaldococcus jannaschii (strain ATCC 43067 / DSM 2661 / JAL-1 / JCM 10045 / NBRC 100440) (Methanococcus jannaschii).